Consider the following 618-residue polypeptide: Two-component response regulator-like APRR1 (618 aa).

Positions 20 to 138 (RILLCDNDST…ELLNLWTHMW (119 aa)) constitute a Response regulatory domain. 5 stretches are compositionally biased toward polar residues: residues 161–174 (SDQS…TNLF), 187–200 (NPQR…ENEW), 246–257 (RNSNPAQFSSAP), 324–334 (PKSTVLRTNGQ), and 375–389 (TEQY…QNGA). Disordered regions lie at residues 161-200 (SDQS…ENEW), 239-260 (SHHE…PKKS), 316-338 (TKQA…DPPL), 368-395 (QAHR…PHSL), and 573-618 (VRKM…ALGT). A CCT domain is found at 533–575 (REEALLKFRRKRNQRCFDKKIRYVNRKRLAERRPRVKGQFVRK). Positions 588-610 (DSADYDDEEEEEEEEEEENRDSS) form a coiled coil. Over residues 590 to 606 (ADYDDEEEEEEEEEEEN) the composition is skewed to acidic residues.

This sequence belongs to the ARR-like family. As to quaternary structure, interacts with PIF1, PIL2, PIF3, PIF4, PIL5, PIL6, ABI3 (via C-terminus), ADO1/ZTL, ADO2, APRR3 and TCP21/CHE. Both the phosphorylated and the dephosphorylated forms interact with ADO1/ZLT. Post-translationally, phosphorylated; during the day. Phosphorylation is required for optimal interaction with APRR3. In terms of tissue distribution, expressed in leaves, flowers and siliques. Restricted to the vasculature.

It is found in the nucleus. Controls photoperiodic flowering response. Component of the circadian clock. Expression of several members of the ARR-like family is controlled by circadian rhythm. The particular coordinated sequential expression of APRR9, APRR7, APRR5, APRR3 and APPR1 result to circadian waves that may be at the basis of the endogenous circadian clock. Positive regulator of CCA1 and LHY expression. The protein is Two-component response regulator-like APRR1 (APRR1) of Arabidopsis thaliana (Mouse-ear cress).